A 179-amino-acid polypeptide reads, in one-letter code: Guanosine-3',5'-bis(diphosphate) 3'-pyrophosphohydrolase MESH1 (179 aa).

Gly2 bears the N-acetylglycine mark. Residue Lys25 is modified to N6-acetyllysine. One can recognise an HD domain in the interval 32-127 (YINHPIGVAR…VKLADKLYNL (96 aa)). Mn(2+) contacts are provided by His35, His61, and Asp62. Residues Glu65 and Asp66 each act as nucleophile in the active site. N6-acetyllysine is present on Lys97. Asp122 lines the Mn(2+) pocket. Lys123 bears the N6-acetyllysine mark.

Belongs to the MESH1 family. It depends on Mn(2+) as a cofactor.

It catalyses the reaction guanosine 3',5'-bis(diphosphate) + H2O = GDP + diphosphate + H(+). Its function is as follows. ppGpp hydrolyzing enzyme involved in starvation response. In Mus musculus (Mouse), this protein is Guanosine-3',5'-bis(diphosphate) 3'-pyrophosphohydrolase MESH1 (Hddc3).